Reading from the N-terminus, the 123-residue chain is Small ribosomal subunit protein uS12cz/uS12cy (123 aa).

It belongs to the universal ribosomal protein uS12 family. Part of the 30S ribosomal subunit.

It localises to the plastid. The protein localises to the chloroplast. With S4 and S5 plays an important role in translational accuracy. Located at the interface of the 30S and 50S subunits. This Gossypium hirsutum (Upland cotton) protein is Small ribosomal subunit protein uS12cz/uS12cy (rps12-A).